Reading from the N-terminus, the 455-residue chain is Protein png1 (455 aa).

Residues 1–110 (MTDGRQQHTR…LPVFPSPPRD (110 aa)) are disordered. The span at 38–53 (SLQEQSRSRSRTQSPS) shows a compositional bias: low complexity. Pro residues predominate over residues 59–73 (HTPPHPSRAPPPPPT). Residues 74–98 (GAHYPSSQSPSQQHQQHQLPASSSL) are compositionally biased toward low complexity. Zn(2+) is bound by residues C199, C202, C231, and C236. Positions 408 to 455 (NLIPREQTSGRPGEQKTPASMQDTPVDWVAAQQMGPGQSGPDRSQDGR) are disordered.

Belongs to the transglutaminase-like superfamily. PNGase family.

This is Protein png1 (png1) from Aspergillus fumigatus (strain ATCC MYA-4609 / CBS 101355 / FGSC A1100 / Af293) (Neosartorya fumigata).